Consider the following 470-residue polypeptide: Cysteine--tRNA ligase (470 aa).

C29 provides a ligand contact to Zn(2+). The short motif at 31-41 (PTVYNYAHIGN) is the 'HIGH' region element. The Zn(2+) site is built by C211, H236, and E240. The 'KMSKS' region signature appears at 273-277 (KMSKS). K276 contributes to the ATP binding site.

It belongs to the class-I aminoacyl-tRNA synthetase family. In terms of assembly, monomer. Zn(2+) serves as cofactor.

The protein localises to the cytoplasm. It carries out the reaction tRNA(Cys) + L-cysteine + ATP = L-cysteinyl-tRNA(Cys) + AMP + diphosphate. This Phenylobacterium zucineum (strain HLK1) protein is Cysteine--tRNA ligase.